The primary structure comprises 245 residues: tRNA pseudouridine synthase A (245 aa).

D52 (nucleophile) is an active-site residue. Position 111 (Y111) interacts with substrate.

This sequence belongs to the tRNA pseudouridine synthase TruA family. In terms of assembly, homodimer.

It carries out the reaction uridine(38/39/40) in tRNA = pseudouridine(38/39/40) in tRNA. Functionally, formation of pseudouridine at positions 38, 39 and 40 in the anticodon stem and loop of transfer RNAs. The protein is tRNA pseudouridine synthase A of Rickettsia rickettsii (strain Iowa).